A 260-amino-acid chain; its full sequence is Proteasome subunit alpha (260 aa).

This sequence belongs to the peptidase T1A family. As to quaternary structure, the 20S proteasome core is composed of 14 alpha and 14 beta subunits that assemble into four stacked heptameric rings, resulting in a barrel-shaped structure. The two inner rings, each composed of seven catalytic beta subunits, are sandwiched by two outer rings, each composed of seven alpha subunits. The catalytic chamber with the active sites is on the inside of the barrel. Has a gated structure, the ends of the cylinder being occluded by the N-termini of the alpha-subunits. Is capped at one or both ends by the proteasome regulatory ATPase, PAN.

The protein localises to the cytoplasm. Its activity is regulated as follows. The formation of the proteasomal ATPase PAN-20S proteasome complex, via the docking of the C-termini of PAN into the intersubunit pockets in the alpha-rings, triggers opening of the gate for substrate entry. Interconversion between the open-gate and close-gate conformations leads to a dynamic regulation of the 20S proteasome proteolysis activity. Component of the proteasome core, a large protease complex with broad specificity involved in protein degradation. In Thermococcus sp. (strain JCM 11816 / KS-1), this protein is Proteasome subunit alpha.